Reading from the N-terminus, the 537-residue chain is Chaperonin GroEL (537 aa).

ATP is bound by residues 29–32 (TLGP), 86–90 (DGTTT), G413, and D492.

It belongs to the chaperonin (HSP60) family. As to quaternary structure, forms a cylinder of 14 subunits composed of two heptameric rings stacked back-to-back. Interacts with the co-chaperonin GroES.

It is found in the cytoplasm. The enzyme catalyses ATP + H2O + a folded polypeptide = ADP + phosphate + an unfolded polypeptide.. Its function is as follows. Together with its co-chaperonin GroES, plays an essential role in assisting protein folding. The GroEL-GroES system forms a nano-cage that allows encapsulation of the non-native substrate proteins and provides a physical environment optimized to promote and accelerate protein folding. The sequence is that of Chaperonin GroEL from Dehalococcoides mccartyi (strain ATCC BAA-2100 / JCM 16839 / KCTC 5957 / BAV1).